Here is a 163-residue protein sequence, read N- to C-terminus: Nucleotide-binding protein KPK_4305 (163 aa).

The protein belongs to the YajQ family.

Nucleotide-binding protein. This Klebsiella pneumoniae (strain 342) protein is Nucleotide-binding protein KPK_4305.